Reading from the N-terminus, the 162-residue chain is Ribose-5-phosphate isomerase B (162 aa).

D-ribulose 5-phosphate is bound by residues 11 to 12 (DH) and 70 to 74 (GSGNG). Catalysis depends on glutamate 75, which acts as the Proton acceptor. The active-site Proton donor is histidine 102. Asparagine 103, arginine 113, arginine 137, and arginine 141 together coordinate D-ribulose 5-phosphate.

This sequence belongs to the LacAB/RpiB family. Homodimer.

The enzyme catalyses aldehydo-D-ribose 5-phosphate = D-ribulose 5-phosphate. The protein operates within carbohydrate degradation; pentose phosphate pathway; D-ribose 5-phosphate from D-ribulose 5-phosphate (non-oxidative stage): step 1/1. Catalyzes the interconversion of ribulose-5-P and ribose-5-P. The chain is Ribose-5-phosphate isomerase B from Mycobacterium leprae (strain TN).